The chain runs to 288 residues: Protein shisa-2 (288 aa).

The signal sequence occupies residues 1–23 (MWLEGSPLAVLAAVSFLLSVLAA). Over 24 to 110 (AQGSGEYCHG…DSTAVPIYVP (87 aa)) the chain is Extracellular. A helical transmembrane segment spans residues 111-131 (FLIVGSVFVAFIIVGSLVAIC). The Cytoplasmic portion of the chain corresponds to 132-288 (CCRCLRPKQE…EQMMYPAVTV (157 aa)). The segment covering 161-188 (SSASTSRGSSSRQSSTAASSSSSANSGA) has biased composition (low complexity). Positions 161-198 (SSASTSRGSSSRQSSTAASSSSSANSGARPPPTRSQTN) are disordered.

This sequence belongs to the shisa family. As to quaternary structure, interacts with fzd8 and fgfr1.

Its subcellular location is the endoplasmic reticulum membrane. Plays an essential role in the maturation of presomitic mesoderm cells by individual attenuation of both fgf and wnt signaling. Inhibits both wnt and fgf signaling through the regulation of protein maturation and cell surface transportation of their receptors within the endoplasmic reticulum. This is Protein shisa-2 (shisa2) from Xenopus laevis (African clawed frog).